The chain runs to 104 residues: Integration host factor subunit beta (104 aa).

The span at 83–95 (GKEMRERLNRDSG) shows a compositional bias: basic and acidic residues. The tract at residues 83–104 (GKEMRERLNRDSGDDAPTSDTA) is disordered.

It belongs to the bacterial histone-like protein family. As to quaternary structure, heterodimer of an alpha and a beta chain.

Functionally, this protein is one of the two subunits of integration host factor, a specific DNA-binding protein that functions in genetic recombination as well as in transcriptional and translational control. In Rhodopseudomonas palustris (strain ATCC BAA-98 / CGA009), this protein is Integration host factor subunit beta.